The chain runs to 415 residues: Gamma-glutamyl phosphate reductase (415 aa).

This sequence belongs to the gamma-glutamyl phosphate reductase family.

The protein resides in the cytoplasm. It catalyses the reaction L-glutamate 5-semialdehyde + phosphate + NADP(+) = L-glutamyl 5-phosphate + NADPH + H(+). Its pathway is amino-acid biosynthesis; L-proline biosynthesis; L-glutamate 5-semialdehyde from L-glutamate: step 2/2. Its function is as follows. Catalyzes the NADPH-dependent reduction of L-glutamate 5-phosphate into L-glutamate 5-semialdehyde and phosphate. The product spontaneously undergoes cyclization to form 1-pyrroline-5-carboxylate. This Listeria welshimeri serovar 6b (strain ATCC 35897 / DSM 20650 / CCUG 15529 / CIP 8149 / NCTC 11857 / SLCC 5334 / V8) protein is Gamma-glutamyl phosphate reductase.